Here is a 283-residue protein sequence, read N- to C-terminus: Nucleoid occlusion protein (283 aa).

The disordered stretch occupies residues 1–21 (MKHSFSRFFGFGEKEEEPEIA). Positions 148-167 (EALAQRLGKGQSTIANKLRL) form a DNA-binding region, H-T-H motif.

Belongs to the ParB family.

It localises to the cytoplasm. The protein resides in the nucleoid. Functionally, effects nucleoid occlusion by binding relatively nonspecifically to DNA and preventing the assembly of the division machinery in the vicinity of the nucleoid, especially under conditions that disturb the cell cycle. It helps to coordinate cell division and chromosome segregation by preventing the formation of the Z ring through the nucleoid, which would cause chromosome breakage. This Bacillus velezensis (strain DSM 23117 / BGSC 10A6 / LMG 26770 / FZB42) (Bacillus amyloliquefaciens subsp. plantarum) protein is Nucleoid occlusion protein.